The chain runs to 95 residues: MLHTLHRSPWLTDFAALLRLLSEGDELLLLQDGVTAAVDGNRYLESLRNAPIKVYALNEDLIARGLTGQISNDIIPIDYTDFVRLTVKHSSQMAW.

It belongs to the DsrH/TusB family. Heterohexamer, formed by a dimer of trimers. The hexameric TusBCD complex contains 2 copies each of TusB, TusC and TusD. The TusBCD complex interacts with TusE.

Its subcellular location is the cytoplasm. Part of a sulfur-relay system required for 2-thiolation of 5-methylaminomethyl-2-thiouridine (mnm(5)s(2)U) at tRNA wobble positions. This is Protein TusB from Escherichia coli O139:H28 (strain E24377A / ETEC).